A 333-amino-acid polypeptide reads, in one-letter code: GTPase Obg (333 aa).

One can recognise an Obg domain in the interval 1–158 (MFIDSAKIYV…RNIDLELKLL (158 aa)). The interval 121–143 (HGGKGNQHFATPTNRAPRYSEPA) is disordered. In terms of domain architecture, OBG-type G spans 159 to 323 (ADIGLVGFPN…LKDVLWRIIQ (165 aa)). GTP-binding positions include 165–172 (GFPNAGKS), 190–194 (FTTLE), 212–215 (DIPG), 279–282 (SKMD), and 304–306 (SSV). Positions 172 and 192 each coordinate Mg(2+).

The protein belongs to the TRAFAC class OBG-HflX-like GTPase superfamily. OBG GTPase family. As to quaternary structure, monomer. Mg(2+) is required as a cofactor.

Its subcellular location is the cytoplasm. Functionally, an essential GTPase which binds GTP, GDP and possibly (p)ppGpp with moderate affinity, with high nucleotide exchange rates and a fairly low GTP hydrolysis rate. Plays a role in control of the cell cycle, stress response, ribosome biogenesis and in those bacteria that undergo differentiation, in morphogenesis control. The protein is GTPase Obg of Chloroherpeton thalassium (strain ATCC 35110 / GB-78).